The following is a 144-amino-acid chain: Interleukin-9 (144 aa).

Residues 1–18 (MLLAMVLTSALLLCSVAG) form the signal peptide. The residue at position 19 (glutamine 19) is a Pyrrolidone carboxylic acid. N-linked (GlcNAc...) asparagine glycans are attached at residues asparagine 50, asparagine 63, asparagine 78, and asparagine 114.

The protein belongs to the IL-7/IL-9 family. As to quaternary structure, interacts with IL9R. Interacts with IL2RG.

Its subcellular location is the secreted. In terms of biological role, multifunctional cytokine secreted mainly by T-helper 2 lymphocytes and also mast cells or NKT cells that plays important roles in the immune response against parasites. Affects intestinal epithelial permeability and adaptive immunity. In addition, induces the differentiation of specific T-cell subsets such as IL-17 producing helper T-cells (TH17) and also proliferation and differentiation of mast cells. Mechanistically, exerts its biological effects through a receptor composed of IL9R subunit and a signal transducing subunit IL2RG. Receptor stimulation results in the rapid activation of JAK1 and JAK3 kinase activities leading to STAT1, STAT3 and STAT5-mediated transcriptional programs. Induction of differentiation genes seems to be mediated by STAT1 alone, while protection of cells from apoptosis depends on STAT3 and STAT5. The polypeptide is Interleukin-9 (IL9) (Homo sapiens (Human)).